A 293-amino-acid chain; its full sequence is Phosphate import ATP-binding protein PstB (293 aa).

Residues 46-288 enclose the ABC transporter domain; sequence FGIRGVDVFY…PDHELTEAYI (243 aa). 78-85 serves as a coordination point for ATP; that stretch reads GPSGCGKS.

Belongs to the ABC transporter superfamily. Phosphate importer (TC 3.A.1.7) family. As to quaternary structure, the complex is composed of two ATP-binding proteins (PstB), two transmembrane proteins (PstC and PstA) and a solute-binding protein (PstS).

The protein localises to the cell inner membrane. It catalyses the reaction phosphate(out) + ATP + H2O = ADP + 2 phosphate(in) + H(+). Functionally, part of the ABC transporter complex PstSACB involved in phosphate import. Responsible for energy coupling to the transport system. This Saccharophagus degradans (strain 2-40 / ATCC 43961 / DSM 17024) protein is Phosphate import ATP-binding protein PstB.